The primary structure comprises 373 residues: MTDLSIVSVETTILDVPLVRPHKFATTSMTAQPLLLVAVTTAGGVTGYGEGVVPGGPWWGGESVETMQAIVERYIVPVLLGRGVDEITGIMPDIERVVANARFAKAAVDVALHDAWARSLGVPVHTLLGGAFRKSVDVTWALGAAPAEEIIEEALDLVESKRHFSFKLKMGALDPAVDTARVVQIAQALQGKAGVRIDVNARWDRLTALKYVPRLVEGGVELIEQPTPGEQLEVLAELNRLVPVPVMADESVQTPHDALEVARRGAADVIALKTTKCGGLQKSREVVAIAKAAGIACHGATSIEGPIGTAASIHFACAEPGIDFGTELFGPLLFSEELLQEPIRYADGQVFLPEGPGLGVELNMDAVKTWTRN.

Lys169 is an active-site residue. Lys169 serves as the catalytic Proton acceptor. Residues Asp198, Glu224, and Asp249 each coordinate Mn(2+). Residue Glu327 is the Proton donor of the active site.

It belongs to the mandelate racemase/muconate lactonizing enzyme family. Mn(2+) is required as a cofactor.

It carries out the reaction (S)-muconolactone = cis,cis-muconate + H(+). The polypeptide is Muconate cycloisomerase 1 (catB) (Rhodococcus opacus (Nocardia opaca)).